A 173-amino-acid chain; its full sequence is Small ribosomal subunit protein uS5 (173 aa).

The S5 DRBM domain occupies 17 to 80 (WQERVIQIRR…ADGKKQLIDV (64 aa)).

It belongs to the universal ribosomal protein uS5 family. As to quaternary structure, part of the 30S ribosomal subunit. Contacts proteins S4 and S8.

Functionally, with S4 and S12 plays an important role in translational accuracy. In terms of biological role, located at the back of the 30S subunit body where it stabilizes the conformation of the head with respect to the body. The protein is Small ribosomal subunit protein uS5 of Crocosphaera subtropica (strain ATCC 51142 / BH68) (Cyanothece sp. (strain ATCC 51142)).